The sequence spans 846 residues: Outer membrane channel protein CpnT (846 aa).

Residues 1–443 (MAPLAVDPAA…AGVRGLKERL (443 aa)) are NTD. The tract at residues 442 to 630 (RLEPTTPHLE…SGSEPPGLHA (189 aa)) is disordered. Pro residues-rich tracts occupy residues 450-466 (LEPPATPPRPGPQPPRI) and 475-504 (APAPAAKPAPVPANGPLPHSPTESKPPPVD). Composition is skewed to low complexity over residues 508–517 (EPVAPSSASA) and 562–586 (APATAHQPQWATTPAAPAAAPHSTP). Positions 651-846 (RLSDEAVDPQ…ELIRRGVLRQ (196 aa)) are TNT. The TNT domain occupies 751 to 846 (YGPQLDRIGG…ELIRRGVLRQ (96 aa)). The active site involves Arg-757. Residue Arg-780 participates in NAD(+) binding. The active site involves Gln-822.

Interacts with the immunity factor for TNT (IFT) homolog. Post-translationally, the C-terminal domain (TNT) is probably cleaved.

Its subcellular location is the cell outer membrane. It is found in the secreted. It localises to the cell surface. It carries out the reaction NAD(+) + H2O = ADP-D-ribose + nicotinamide + H(+). With respect to regulation, glycohydrolase activity is completely inhibited by interaction with the immunity factor for TNT (IFT) homolog. This inhibition protects M.bovis from self-poisoning. In terms of biological role, the N-terminal domain (NTD) forms an outer membrane channel and is used for uptake of nutrients across the outer membrane. Also confers susceptibility to structurally different antibiotics and antituberculosis drugs, and to toxic immune factors such as nitric oxide (NO). The C-terminal domain (TNT) is dispensable for normal growth in macrophages. The polypeptide is Outer membrane channel protein CpnT (Mycobacterium bovis (strain BCG / Pasteur 1173P2)).